The primary structure comprises 312 residues: Malate dehydrogenase (312 aa).

NAD(+) contacts are provided by residues 7 to 13 (GAAGGIG) and D34. R81 and R87 together coordinate substrate. NAD(+)-binding positions include N94 and 117–119 (ITN). The substrate site is built by N119 and R153. Catalysis depends on H177, which acts as the Proton acceptor. M227 contacts NAD(+).

This sequence belongs to the LDH/MDH superfamily. MDH type 1 family. As to quaternary structure, homodimer.

It catalyses the reaction (S)-malate + NAD(+) = oxaloacetate + NADH + H(+). Its function is as follows. Catalyzes the reversible oxidation of malate to oxaloacetate. This is Malate dehydrogenase from Escherichia coli O7:K1 (strain IAI39 / ExPEC).